Reading from the N-terminus, the 358-residue chain is tRNA-specific 2-thiouridylase MnmA (358 aa).

Residues 7–14 (AMSGGVDS) and Met33 each bind ATP. The Nucleophile role is filled by Cys102. Cysteines 102 and 199 form a disulfide. Gly126 lines the ATP pocket. Residues 149–151 (KDQ) form an interaction with tRNA region. Cys199 acts as the Cysteine persulfide intermediate in catalysis. Positions 305-306 (RY) are interaction with tRNA.

The protein belongs to the MnmA/TRMU family.

The protein localises to the cytoplasm. The catalysed reaction is S-sulfanyl-L-cysteinyl-[protein] + uridine(34) in tRNA + AH2 + ATP = 2-thiouridine(34) in tRNA + L-cysteinyl-[protein] + A + AMP + diphosphate + H(+). Functionally, catalyzes the 2-thiolation of uridine at the wobble position (U34) of tRNA, leading to the formation of s(2)U34. The chain is tRNA-specific 2-thiouridylase MnmA from Halothermothrix orenii (strain H 168 / OCM 544 / DSM 9562).